The following is a 464-amino-acid chain: 3-isopropylmalate dehydratase large subunit (464 aa).

[4Fe-4S] cluster-binding residues include C337, C397, and C400.

Belongs to the aconitase/IPM isomerase family. LeuC type 1 subfamily. Heterodimer of LeuC and LeuD. [4Fe-4S] cluster is required as a cofactor.

It catalyses the reaction (2R,3S)-3-isopropylmalate = (2S)-2-isopropylmalate. It participates in amino-acid biosynthesis; L-leucine biosynthesis; L-leucine from 3-methyl-2-oxobutanoate: step 2/4. In terms of biological role, catalyzes the isomerization between 2-isopropylmalate and 3-isopropylmalate, via the formation of 2-isopropylmaleate. The polypeptide is 3-isopropylmalate dehydratase large subunit (Bacillus cereus (strain B4264)).